The chain runs to 163 residues: UPF0262 protein RPE_4483 (163 aa).

It belongs to the UPF0262 family.

The chain is UPF0262 protein RPE_4483 from Rhodopseudomonas palustris (strain BisA53).